Reading from the N-terminus, the 605-residue chain is Adenine deaminase (605 aa).

This sequence belongs to the metallo-dependent hydrolases superfamily. Adenine deaminase family. It depends on Mn(2+) as a cofactor.

The catalysed reaction is adenine + H2O + H(+) = hypoxanthine + NH4(+). The protein is Adenine deaminase of Staphylothermus marinus (strain ATCC 43588 / DSM 3639 / JCM 9404 / F1).